We begin with the raw amino-acid sequence, 254 residues long: Alcohol dehydrogenase (254 aa).

An NAD(+)-binding site is contributed by 10–33 (FVAGLGGIGLDTSREIVKSGPKNL). Ser-138 serves as a coordination point for substrate. The Proton acceptor role is filled by Tyr-151.

The protein belongs to the short-chain dehydrogenases/reductases (SDR) family. Homodimer.

The enzyme catalyses a primary alcohol + NAD(+) = an aldehyde + NADH + H(+). The catalysed reaction is a secondary alcohol + NAD(+) = a ketone + NADH + H(+). In Drosophila affinidisjuncta (Fruit fly), this protein is Alcohol dehydrogenase (Adh).